Consider the following 453-residue polypeptide: Na(+)/H(+) antiporter NhaA (453 aa).

11 helical membrane-spanning segments follow: residues 27 to 47, 78 to 98, 114 to 134, 143 to 163, 172 to 192, 201 to 221, 222 to 242, 316 to 336, 346 to 366, 385 to 405, and 421 to 441; these read FLHIEALSGIVLLLAAASALI, LHFWVNDALMTIFFLVAGMEI, ILPIVAAIGGVCVPAIIYFIF, GWAVPTATDIAFALGILALLG, IILLSLAIIDDIIAVLIIAFF, GLLIAGGGIALVLFFQWIGLA, SAWLYILPGAIIWWGLMVTGV, PWVAYGIMPVFAFANAGVSFA, FLIVFGVVIGLFVGKPLGIIT, WAGILLIGFLAGIGFTMSIFV, and IGVLCGSGLSALIGLGYGFIY.

It belongs to the NhaA Na(+)/H(+) (TC 2.A.33) antiporter family.

It is found in the cell inner membrane. It carries out the reaction Na(+)(in) + 2 H(+)(out) = Na(+)(out) + 2 H(+)(in). In terms of biological role, na(+)/H(+) antiporter that extrudes sodium in exchange for external protons. This Bartonella tribocorum (strain CIP 105476 / IBS 506) protein is Na(+)/H(+) antiporter NhaA.